The primary structure comprises 420 residues: Putative RNA-binding protein Alsin2 (420 aa).

Residues 99 to 130 adopt a coiled-coil conformation; it reads IADCDRRTDSAKQRLKETQEELTAEVAEKANA. Composition is skewed to basic and acidic residues over residues 242–259, 282–363, and 373–399; these read AELKRTGKMTDREDEGRG, RERQ…RFGD, and HHRDDRRRSRSRERSPRERRNFNHFRD. The tract at residues 242–420 is disordered; the sequence is AELKRTGKMT…SYSRERNYRR (179 aa).

It belongs to the Luc7 family. Interacts with x16 (via Arg/Ser-rich region).

In terms of biological role, may bind to RNA via its Arg/Ser-rich domain. The protein is Putative RNA-binding protein Alsin2 of Drosophila melanogaster (Fruit fly).